Consider the following 109-residue polypeptide: uncharacterized protein (109 aa).

The segment at 63-109 (DPSTWEPEEHETEHCRGHTLPEKKQKPQGGHGSDKDEDKGNCGCDHC) is disordered. 2 stretches are compositionally biased toward basic and acidic residues: residues 73 to 87 (ETEH…EKKQ) and 94 to 109 (GSDK…CDHC).

This is an uncharacterized protein from Caenorhabditis elegans.